The sequence spans 195 residues: 7-methyl-GTP pyrophosphatase (195 aa).

Catalysis depends on D70, which acts as the Proton acceptor.

The protein belongs to the Maf family. YceF subfamily. A divalent metal cation serves as cofactor.

It localises to the cytoplasm. The catalysed reaction is N(7)-methyl-GTP + H2O = N(7)-methyl-GMP + diphosphate + H(+). Nucleoside triphosphate pyrophosphatase that hydrolyzes 7-methyl-GTP (m(7)GTP). May have a dual role in cell division arrest and in preventing the incorporation of modified nucleotides into cellular nucleic acids. This Shewanella sp. (strain MR-4) protein is 7-methyl-GTP pyrophosphatase.